Reading from the N-terminus, the 492-residue chain is UDP-glucosyl transferase 73DL1 (492 aa).

His27 (proton acceptor) is an active-site residue. Asp131 acts as the Charge relay in catalysis. 6 residues coordinate UDP: Trp352, Val353, His370, Thr375, Glu378, and Tyr392.

This sequence belongs to the UDP-glycosyltransferase family. As to expression, mainly expressed in flowers, flower buds and young leaves, and, to a lesser extent, in old leaves, stems and roots.

It participates in secondary metabolite biosynthesis; terpenoid biosynthesis. In terms of biological role, component of the oleanane-type triterpene saponins (e.g. saponarioside A and saponarioside B) biosynthetic pathway, leading to the production of natural products with detergent properties used as traditional sources of soap. A glycosyltransferase that mediates the conversion of QA-mono to QA-di via the elongation of the C-3 sugar chain with a D-galactose. The protein is UDP-glucosyl transferase 73DL1 of Saponaria officinalis (Common soapwort).